The sequence spans 659 residues: MTLLSPGIELKETTVQSTVVNNSTGTAALAGKFQWGPAFQIKQVTNEVDLVNTFGQPTAETADYFMSAMNFLQYGNDLRVVRAVDRDTAKNSSPIAGNIDYTISTPGSNYAVGDKITVKYVSDDIETEGKITEVDADGKIKKINIPTGKNYAKAKEVGEYPTLGSNWTAEISSSSSGLAAVITLGKIITDSGILLAEIENAEAAMTAVDFQANLKKYGIPGVVALYPGELGDKIEIEIVSKADYAKGASALLPIYPGGGTRASTAKAVFGYGPQTDSQYAIIVRRNDAIVQSVVLSTKRGEKDIYDSNIYIDDFFAKGGSEYIFATAQNWPEGFSGILTLSGGLSSNAEVTAGDLMEAWDFFADRESVDVQLFIAGSCAGESLETASTVQKHVVSIGDARQDCLVLCSPPRETVVGIPVTRAVDNLVNWRTAAGSYTDNNFNISSTYAAIDGNHKYQYDKYNDVNRWVPLAADIAGLCARTDNVSQTWMSPAGYNRGQILNVIKLAIETRQAQRDRLYQEAINPVTGTGGDGYVLYGDKTATSVPSPFDRINVRRLFNMLKTNIGRSSKYRLFELNNAFTRSSFRTETAQYLQGNKALGGIYEYRVVCDTTNNTPSVIDRNEFVATFYIQPARSINYITLNFVATATGADFDELTGLAG.

Belongs to the myoviridae tail sheath protein family. In terms of assembly, hexamer.

The protein localises to the virion. Structural component of the bacteriophage tail which consists of a contractile sheath, a tube and a baseplate. The central cylindrical segment of the tail consists of a rigid tube, composed of multiple copies of gp19, surrounded by the outer contractile sheath assembled from gp18 subunits. A total of 138 copies of gp18 arranged into 23 hexameric rings constitutes the sheath. During infection, contraction of the sheath drives the central tube through the host outer membrane, creating a channel for DNA ejection from the capsid into the host cell. The sequence is that of Tail sheath protein (18) from Escherichia coli (Bacteriophage T4).